Here is a 582-residue protein sequence, read N- to C-terminus: Aspartate--tRNA ligase (582 aa).

Glu-174 contributes to the L-aspartate binding site. The segment at 198 to 201 (QITK) is aspartate. Arg-220 contacts L-aspartate. Residues 220 to 222 (RDE) and Gln-229 each bind ATP. His-443 serves as a coordination point for L-aspartate. Glu-477 serves as a coordination point for ATP. Arg-484 contacts L-aspartate. 529-532 (GLDR) is a binding site for ATP.

Belongs to the class-II aminoacyl-tRNA synthetase family. Type 1 subfamily. As to quaternary structure, homodimer.

It is found in the cytoplasm. The enzyme catalyses tRNA(Asp) + L-aspartate + ATP = L-aspartyl-tRNA(Asp) + AMP + diphosphate. Functionally, catalyzes the attachment of L-aspartate to tRNA(Asp) in a two-step reaction: L-aspartate is first activated by ATP to form Asp-AMP and then transferred to the acceptor end of tRNA(Asp). In Streptococcus equi subsp. zooepidemicus (strain MGCS10565), this protein is Aspartate--tRNA ligase.